The following is a 351-amino-acid chain: tRNA (guanine(26)-N(2))-dimethyltransferase (351 aa).

The 347-residue stretch at 4-350 folds into the Trm1 methyltransferase domain; the sequence is VLRREGAVQF…AGYGEVKRAL (347 aa). S-adenosyl-L-methionine-binding residues include Arg-39, Arg-65, Asp-83, Asp-109, and Ala-110.

This sequence belongs to the class I-like SAM-binding methyltransferase superfamily. Trm1 family.

The catalysed reaction is guanosine(26) in tRNA + 2 S-adenosyl-L-methionine = N(2)-dimethylguanosine(26) in tRNA + 2 S-adenosyl-L-homocysteine + 2 H(+). In terms of biological role, dimethylates a single guanine residue at position 26 of a number of tRNAs using S-adenosyl-L-methionine as donor of the methyl groups. This chain is tRNA (guanine(26)-N(2))-dimethyltransferase, found in Pyrobaculum neutrophilum (strain DSM 2338 / JCM 9278 / NBRC 100436 / V24Sta) (Thermoproteus neutrophilus).